A 751-amino-acid polypeptide reads, in one-letter code: Methionine--tRNA ligase, cytoplasmic (751 aa).

The residue at position 2 (serine 2) is an N-acetylserine. The interaction with ARC1 stretch occupies residues 36–92 (LKPEVDNDNAAMELRNTKEPFLLFDANAILRYVMDDFEGQTSDKYQFALASLQNLLY). The 'HIGH' region motif lies at 205-215 (PYVNNVPHLGN). ATP is bound at residue lysine 411. Positions 525-529 (KFSKS) match the 'KMSKS' region motif.

The protein belongs to the class-I aminoacyl-tRNA synthetase family. As to quaternary structure, component of a yeast aminoacyl-tRNA synthase (aaRS) complex formed by methionyl-tRNA synthase MES1, glutamyl-tRNA synthase GUS1 and the tRNA aminoacylation cofactor ARC1 in a stoichiometric complex. Interacts (via N-ter) with ARC1 (via N-ter). Can also form a stable binary complex with ARC1 that is functional in terms of aminoacylation. ARC1 increases the affinity for cognate tRNAs due to the presence of a tRNA binding domain in the middle and C-terminal part of ARC1.

The protein resides in the cytoplasm. It carries out the reaction tRNA(Met) + L-methionine + ATP = L-methionyl-tRNA(Met) + AMP + diphosphate. Functionally, catalyzes the attachment of methionine to tRNA(Met) in a two-step reaction: methionine is first activated by ATP to form Met-AMP and then transferred to the acceptor end of tRNA(Met). In Saccharomyces cerevisiae (strain ATCC 204508 / S288c) (Baker's yeast), this protein is Methionine--tRNA ligase, cytoplasmic (MES1).